Consider the following 539-residue polypeptide: MAKEIKFSEEARRAMLRGVDKLADAVKVTLGPKGRNVVLEKKFGSPLITNDGVTIAKEIELEDPFENMGAKLVAEVASKTNDVAGDGTTTATVLAQAMIREGLKNVTAGANPMGIRKGIEKAVAVAVEELKAISKPIQGKESIAQVAAISAADEEVGQLIAEAMERVGNDGVITLEESKGFTTELDVVEGMQFDRGYASPYMITDTEKMEAVLENPYILITDKKISNIQDILPILEQVVQQGKPLLIIAEDVEGEALATLVVNKLRGTFTAVAVKAPGFGDRRKAMLEDIAILTGGEVISEELGRELKSTTIASLGRASKVVVTKENTTIVEGAGDSERIKARINQIRAQLEETTSEFDRGKLQERLAKLAGGVAVIKVGAATETELKERKLRIEDALNSTRAAVEEGIVAGGGTALMNVYNKVAAIEAEGDEATGVKIVLRAIEEPVRQIAQNAGLEGSVIVERLKSEKPGIGFNAATGEWVNMIEAGIVDPTKVTRSALQNAASVAAMFLTTEAVVADKPEENKGGNSGMPDMGGMM.

ATP is bound by residues 29–32, 86–90, Gly-413, 476–478, and Asp-492; these read TLGP, DGTTT, and NAA.

The protein belongs to the chaperonin (HSP60) family. Forms a cylinder of 14 subunits composed of two heptameric rings stacked back-to-back. Interacts with the co-chaperonin GroES.

The protein resides in the cytoplasm. It catalyses the reaction ATP + H2O + a folded polypeptide = ADP + phosphate + an unfolded polypeptide.. In terms of biological role, together with its co-chaperonin GroES, plays an essential role in assisting protein folding. The GroEL-GroES system forms a nano-cage that allows encapsulation of the non-native substrate proteins and provides a physical environment optimized to promote and accelerate protein folding. This is Chaperonin GroEL from Parageobacillus thermoglucosidasius (Geobacillus thermoglucosidasius).